Reading from the N-terminus, the 861-residue chain is Extra-large guanine nucleotide-binding protein 2 (861 aa).

Disordered stretches follow at residues 1–32 (MAAV…TSSG) and 121–168 (VSGS…DDRV). Basic and acidic residues predominate over residues 131-143 (KRLDVPEEVKSPA). A compositionally biased stretch (low complexity) spans 146–156 (RLSPSSPLSAS). A compositionally biased stretch (basic and acidic residues) spans 157-168 (AREEDHLDDDRV). Residues 204–211 (RAERKGKR) carry the Nuclear localization signal motif. Residues 214 to 257 (CYRCQLGNRFTEKEVCIVCDAKYCFNCVRRAMGAMPEGRKCQAC) form an RING-type; degenerate zinc finger. In terms of domain architecture, G-alpha spans 461–853 (MLNKLLLIGS…TSMFQEMSTT (393 aa)). The tract at residues 464-477 (KLLLIGSEKGGATT) is G1 motif. 469 to 477 (GSEKGGATT) contacts GTP. Threonine 476 lines the Ca(2+) pocket. The interval 523–545 (EMSNDQSSGNVGDETSAKPGNSI) is disordered. 624-632 (DILQAEGLS) contacts GTP. The segment at 624-632 (DILQAEGLS) is G2 motif. Serine 632 is a Ca(2+) binding site. The G3 motif stretch occupies residues 665–674 (YQLIRLNPRS). The segment at 737–744 (LLVLTKFD) is G4 motif. 741-744 (TKFD) contacts GTP. The segment at 818–823 (QVSLES) is G5 motif.

This sequence belongs to the G-alpha family. XLG subfamily. Interacts with GB1. Component of a G-protein complex at least composed of XLG2 and GB1. Interacts with RTV1. It depends on Ca(2+) as a cofactor. Ubiquitous. Strongly expressed in vascular tissues, root and shoot meristems and lateral root primordia.

It is found in the nucleus. Its function is as follows. Guanine nucleotide-binding proteins (G proteins) are involved as modulators or transducers in various transmembrane signaling systems. Binds GTP with specificity. Plays a role in the root morphogenesis by regulation of the cell proliferation. Acts as a positive regulator in resistance to pathogen that triggers the salicylic acid (SA) pathway. Promotes the DNA binding activity of RTV1 specifically to promoter regions of FT and SOC1 in vivo leading to the activation of floral integrator genes. This chain is Extra-large guanine nucleotide-binding protein 2 (XLG2), found in Arabidopsis thaliana (Mouse-ear cress).